The sequence spans 745 residues: Putative cryptochrome DASH, mitochondrial (745 aa).

The N-terminal 22 residues, 1-22 (MAPSKVVIYAMRRELRLSDNPI), are a transit peptide targeting the mitochondrion. A Photolyase/cryptochrome alpha/beta domain is found at 23 to 166 (FHHLSNPESK…DFKLWDDEKY (144 aa)). 2 disordered regions span residues 563 to 688 (KFNL…GGGG) and 702 to 745 (GGYR…QTDA). The span at 571–584 (SKVKKRPFFRKRGT) shows a compositional bias: basic residues. Over residues 591-603 (GSAESPGSSDSHS) the composition is skewed to low complexity. Gly residues predominate over residues 604 to 616 (GSGGSPDGSGGGN). Residues 632–648 (QQTHQGSGRSQSSSNHG) are compositionally biased toward low complexity. 2 stretches are compositionally biased toward gly residues: residues 672–688 (RGGGGGRGGRGGRGGGG) and 702–718 (GGYRGGGRGRGGGGGFR). Polar residues predominate over residues 735–745 (QQVASQFQTDA).

This sequence belongs to the DNA photolyase class-1 family. The cofactor is FAD. (6R)-5,10-methylene-5,6,7,8-tetrahydrofolate serves as cofactor.

Its subcellular location is the mitochondrion. Functionally, may have a photoreceptor function. This chain is Putative cryptochrome DASH, mitochondrial (cry), found in Neurospora crassa (strain ATCC 24698 / 74-OR23-1A / CBS 708.71 / DSM 1257 / FGSC 987).